The chain runs to 156 residues: Endoribonuclease YbeY (156 aa).

Residues His-122, His-126, and His-132 each coordinate Zn(2+).

The protein belongs to the endoribonuclease YbeY family. It depends on Zn(2+) as a cofactor.

The protein resides in the cytoplasm. Its function is as follows. Single strand-specific metallo-endoribonuclease involved in late-stage 70S ribosome quality control and in maturation of the 3' terminus of the 16S rRNA. The chain is Endoribonuclease YbeY from Syntrophomonas wolfei subsp. wolfei (strain DSM 2245B / Goettingen).